A 377-amino-acid chain; its full sequence is uncharacterized protein (377 aa).

Residues 1–25 (MAQQTNVAGQKTEKQRKAPFRADHV) are disordered. The segment covering 11-24 (KTEKQRKAPFRADH) has biased composition (basic and acidic residues).

The protein to B.subtilis YxjG.

This is an uncharacterized protein from Bacillus subtilis (strain 168).